Consider the following 145-residue polypeptide: Putative pre-16S rRNA nuclease (145 aa).

It belongs to the YqgF nuclease family.

Its subcellular location is the cytoplasm. Could be a nuclease involved in processing of the 5'-end of pre-16S rRNA. In Pseudomonas fluorescens (strain Pf0-1), this protein is Putative pre-16S rRNA nuclease.